Consider the following 1756-residue polypeptide: Transposon Ty1-BR Gag-Pol polyprotein (1756 aa).

Composition is skewed to polar residues over residues 1–10 (MESQQLSNYP), 48–60 (TKANSQQTTTPAS), and 127–152 (QSQFPQYPSSVGTPLSTPSPESGNTF). 3 disordered regions span residues 1–93 (MESQ…MMTQ), 126–173 (PQSQ…RPPP), and 352–421 (GSRN…SKST). The segment covering 153–165 (TDSSSADSDMTST) has biased composition (low complexity). An RNA-binding region spans residues 299–401 (NNGIHINNKV…NSKSKTARAH (103 aa)). Residues 402 to 418 (NVSTSNNSPSTDNDSIS) show a composition bias toward low complexity. Phosphoserine is present on Ser416. The For protease activity; shared with dimeric partner role is filled by Asp461. Positions 583 to 640 (NVHTSESTRKYPYPFIHRMLAHANAQTIRYSLKNNTITYFNESDVDWSSAIDYQCPDC) are integrase-type zinc finger-like. An Integrase catalytic domain is found at 660-835 (NSYEPFQYLH…AGLDISTLLP (176 aa)). Positions 671 and 736 each coordinate Mg(2+). Disordered stretches follow at residues 956–1088 (SKAV…TEKR) and 1142–1173 (PTELSDSFKELPPINSRQTNSSLGGIGDSNAY). Positions 960 to 969 (SPTDSTPPST) are enriched in low complexity. 2 stretches are compositionally biased toward polar residues: residues 1005-1017 (STPQISDIESTDS) and 1031-1043 (MSQSNTHESSYAS). The span at 1044 to 1053 (KSKDFRHSDS) shows a compositional bias: basic and acidic residues. The span at 1054-1082 (YSDNETNHTNVPISSTGGTNNKTVPQTSE) shows a compositional bias: polar residues. Positions 1179–1213 (KKRSLEDNETEIKVSRDTWNTKNMRSLEPPRSKKR) match the Bipartite nuclear localization signal motif. Positions 1339-1477 (NNYYITQLDI…DILGLEIKYQ (139 aa)) constitute a Reverse transcriptase Ty1/copia-type domain. Positions 1347, 1428, 1429, 1611, 1653, and 1686 each coordinate Mg(2+). The RNase H Ty1/copia-type domain maps to 1611-1753 (DASYGNQPYY…IKTFKLLTNK (143 aa)).

As to quaternary structure, the capsid protein forms a homotrimer, from which the VLPs are assembled. The protease is a homodimer, whose active site consists of two apposed aspartic acid residues. In terms of processing, initially, virus-like particles (VLPs) are composed of the structural unprocessed proteins Gag and Gag-Pol, and also contain the host initiator methionine tRNA (tRNA(i)-Met) which serves as a primer for minus-strand DNA synthesis, and a dimer of genomic Ty RNA. Processing of the polyproteins occurs within the particle and proceeds by an ordered pathway, called maturation. First, the protease (PR) is released by autocatalytic cleavage of the Gag-Pol polyprotein yielding capsid protein p45 and a Pol-p154 precursor protein. This cleavage is a prerequisite for subsequent processing of Pol-p154 at the remaining sites to release the mature structural and catalytic proteins. Maturation takes place prior to the RT reaction and is required to produce transposition-competent VLPs.

The protein localises to the cytoplasm. Its subcellular location is the nucleus. It catalyses the reaction DNA(n) + a 2'-deoxyribonucleoside 5'-triphosphate = DNA(n+1) + diphosphate. The catalysed reaction is Endonucleolytic cleavage to 5'-phosphomonoester.. In terms of biological role, capsid protein (CA) is the structural component of the virus-like particle (VLP), forming the shell that encapsulates the retrotransposons dimeric RNA genome. The particles are assembled from trimer-clustered units and there are holes in the capsid shells that allow for the diffusion of macromolecules. CA also has nucleocapsid-like chaperone activity, promoting primer tRNA(i)-Met annealing to the multipartite primer-binding site (PBS), dimerization of Ty1 RNA and initiation of reverse transcription. Its function is as follows. The aspartyl protease (PR) mediates the proteolytic cleavages of the Gag and Gag-Pol polyproteins after assembly of the VLP. Functionally, reverse transcriptase/ribonuclease H (RT) is a multifunctional enzyme that catalyzes the conversion of the retro-elements RNA genome into dsDNA within the VLP. The enzyme displays a DNA polymerase activity that can copy either DNA or RNA templates, and a ribonuclease H (RNase H) activity that cleaves the RNA strand of RNA-DNA heteroduplexes during plus-strand synthesis and hydrolyzes RNA primers. The conversion leads to a linear dsDNA copy of the retrotransposon that includes long terminal repeats (LTRs) at both ends. Integrase (IN) targets the VLP to the nucleus, where a subparticle preintegration complex (PIC) containing at least integrase and the newly synthesized dsDNA copy of the retrotransposon must transit the nuclear membrane. Once in the nucleus, integrase performs the integration of the dsDNA into the host genome. This chain is Transposon Ty1-BR Gag-Pol polyprotein (TY1B-BR), found in Saccharomyces cerevisiae (strain ATCC 204508 / S288c) (Baker's yeast).